Here is an 81-residue protein sequence, read N- to C-terminus: Exodeoxyribonuclease 7 small subunit (81 aa).

Residues 60–70 (LVDKDGNEKAL) show a composition bias toward basic and acidic residues. A disordered region spans residues 60 to 81 (LVDKDGNEKALDPQNASAPEEE).

Belongs to the XseB family. As to quaternary structure, heterooligomer composed of large and small subunits.

Its subcellular location is the cytoplasm. The catalysed reaction is Exonucleolytic cleavage in either 5'- to 3'- or 3'- to 5'-direction to yield nucleoside 5'-phosphates.. Bidirectionally degrades single-stranded DNA into large acid-insoluble oligonucleotides, which are then degraded further into small acid-soluble oligonucleotides. The chain is Exodeoxyribonuclease 7 small subunit from Lactobacillus johnsonii (strain CNCM I-12250 / La1 / NCC 533).